The chain runs to 438 residues: 2-(3-amino-3-carboxypropyl)histidine synthase subunit 1 (438 aa).

The segment at 1–24 is disordered; the sequence is MAALVVSETAEPGSRVGPGRGRIS. [4Fe-4S] cluster-binding residues include Cys-110, Cys-214, and Cys-342. The segment at 402-438 is disordered; that stretch reads LCQPASDKVQQGSRGGSPAPACESCNCADQKATSPAP. Ser-418 carries the post-translational modification Phosphoserine.

The protein belongs to the DPH1/DPH2 family. DPH1 subfamily. In terms of assembly, component of the 2-(3-amino-3-carboxypropyl)histidine synthase complex composed of DPH1, DPH2, DPH3 and a NADH-dependent reductase. Interacts with DPH2. Interacts with RBM8A. It depends on [4Fe-4S] cluster as a cofactor. In terms of tissue distribution, strongly expressed in kidney and liver. Moderately expressed in brain, skin and testis. Weakly expressed in heart, lung, small intestine, spleen, stomach and thymus.

The protein localises to the nucleus. It localises to the cytoplasm. It carries out the reaction L-histidyl-[translation elongation factor 2] + S-adenosyl-L-methionine = 2-[(3S)-amino-3-carboxypropyl]-L-histidyl-[translation elongation factor 2] + S-methyl-5'-thioadenosine + H(+). The protein operates within protein modification; peptidyl-diphthamide biosynthesis. Catalyzes the first step of diphthamide biosynthesis, a post-translational modification of histidine which occurs in elongation factor 2. DPH1 and DPH2 transfer a 3-amino-3-carboxypropyl (ACP) group from S-adenosyl-L-methionine (SAM) to a histidine residue, the reaction is assisted by a reduction system comprising DPH3 and a NADH-dependent reductase. Acts as a tumor suppressor. The chain is 2-(3-amino-3-carboxypropyl)histidine synthase subunit 1 from Mus musculus (Mouse).